The following is a 235-amino-acid chain: LexA repressor (235 aa).

Residues 26-46 (FDEMKEALDLASKSGIHRLIT) constitute a DNA-binding region (H-T-H motif). The segment at 72–104 (QATTAAPPKGRGAFRPQVLEGGGQAPTTSAQPQ) is disordered. Catalysis depends on for autocatalytic cleavage activity residues S156 and K193.

Belongs to the peptidase S24 family. As to quaternary structure, homodimer.

The catalysed reaction is Hydrolysis of Ala-|-Gly bond in repressor LexA.. Functionally, represses a number of genes involved in the response to DNA damage (SOS response), including recA and lexA. In the presence of single-stranded DNA, RecA interacts with LexA causing an autocatalytic cleavage which disrupts the DNA-binding part of LexA, leading to derepression of the SOS regulon and eventually DNA repair. The sequence is that of LexA repressor from Caulobacter sp. (strain K31).